The chain runs to 88 residues: Large ribosomal subunit protein bL27 (88 aa).

A disordered region spans residues 1–25; sequence MAHKKGASSSSNGRDSEAKRLGVKR.

Belongs to the bacterial ribosomal protein bL27 family.

This is Large ribosomal subunit protein bL27 from Corynebacterium diphtheriae (strain ATCC 700971 / NCTC 13129 / Biotype gravis).